Reading from the N-terminus, the 303-residue chain is MEKVEELKKEIERLKKERNAIILAHNYQLPEVQDVADFVGDSLELARKATKVDADVIVFAGVDFMAETAKILNPDKIVLIPNKRATCAMANMLKVKHILEAKKKYPNAPVVLYVNSTAETKAYADVTVTSANAVDIIRKLDSDVIIFGPDKNLAHYVAKVTGKTIIPIPPEGHCYVHKKFTIEDVERAKKLHPNAKLMVHPECNPEVQEHADIIVSTGGMIRRACEWDEWVVFTEREMVYRLSKLYPNKKFYPAKEDAVCVGMKAITLQHVYESLRDMKYEVTVPEEIAEKARKAIERMLEMS.

Residues His-25 and Ser-42 each contribute to the iminosuccinate site. Residue Cys-87 coordinates [4Fe-4S] cluster. Iminosuccinate is bound by residues 113–115 (YVN) and Ser-130. Position 174 (Cys-174) interacts with [4Fe-4S] cluster. Residues 200 to 202 (HPE) and Thr-217 contribute to the iminosuccinate site. Cys-260 is a binding site for [4Fe-4S] cluster.

Belongs to the quinolinate synthase family. Type 2 subfamily. Homodimer. [4Fe-4S] cluster serves as cofactor.

The protein resides in the cytoplasm. It catalyses the reaction iminosuccinate + dihydroxyacetone phosphate = quinolinate + phosphate + 2 H2O + H(+). Its pathway is cofactor biosynthesis; NAD(+) biosynthesis; quinolinate from iminoaspartate: step 1/1. Catalyzes the condensation of iminoaspartate with dihydroxyacetone phosphate to form quinolinate. The sequence is that of Quinolinate synthase from Pyrococcus furiosus (strain ATCC 43587 / DSM 3638 / JCM 8422 / Vc1).